Consider the following 188-residue polypeptide: Threonylcarbamoyl-AMP synthase (188 aa).

The YrdC-like domain maps to 3-188 (QLQPSAVATT…RSGQILRNGS (186 aa)).

Belongs to the SUA5 family. TsaC subfamily.

The protein localises to the cytoplasm. The enzyme catalyses L-threonine + hydrogencarbonate + ATP = L-threonylcarbamoyladenylate + diphosphate + H2O. Its function is as follows. Required for the formation of a threonylcarbamoyl group on adenosine at position 37 (t(6)A37) in tRNAs that read codons beginning with adenine. Catalyzes the conversion of L-threonine, HCO(3)(-)/CO(2) and ATP to give threonylcarbamoyl-AMP (TC-AMP) as the acyladenylate intermediate, with the release of diphosphate. This Shewanella frigidimarina (strain NCIMB 400) protein is Threonylcarbamoyl-AMP synthase.